We begin with the raw amino-acid sequence, 367 residues long: GDSL esterase/lipase 3 (367 aa).

Positions 1–23 are cleaved as a signal peptide; sequence MVRLVLIIFFVYTIILSIGSINC. Catalysis depends on S42, which acts as the Nucleophile. Residues N175, N194, and N321 are each glycosylated (N-linked (GlcNAc...) asparagine). Residues D329 and H332 contribute to the active site. Residue N351 is glycosylated (N-linked (GlcNAc...) asparagine).

This sequence belongs to the 'GDSL' lipolytic enzyme family.

It is found in the secreted. This is GDSL esterase/lipase 3 (GLIP3) from Arabidopsis thaliana (Mouse-ear cress).